A 280-amino-acid polypeptide reads, in one-letter code: MIQTLTDLSALRALVNGWKREGLRVALVPTMGNLHVGHYSLVMLARQYADRVVSSVFVNPTQFGPNEDFACYPRTPEADLRGLEDAGCDALWLPDVDTMYPLGTALATPIHAPGVSDVLEGECRPGHFDGVCTVVARLFNQVQPDVAAFGKKDYQQLAVIRQMVADLAFPIEILGGSIVREADGLAMSSRNQYLSAEERPTSANIHKVLLQMRDSYAVGTPRAQVEDAASHALEQAGFRVDYAVVRLPDLSEPGDGHTGAHVALIAARLGSTRLIDNLEF.

31–38 (MGNLHVGH) serves as a coordination point for ATP. H38 acts as the Proton donor in catalysis. A (R)-pantoate-binding site is contributed by Q62. Q62 is a beta-alanine binding site. An ATP-binding site is contributed by 150–153 (GKKD). Q156 provides a ligand contact to (R)-pantoate. ATP-binding positions include V179 and 187 to 190 (MSSR).

This sequence belongs to the pantothenate synthetase family. Homodimer.

The protein resides in the cytoplasm. The catalysed reaction is (R)-pantoate + beta-alanine + ATP = (R)-pantothenate + AMP + diphosphate + H(+). It functions in the pathway cofactor biosynthesis; (R)-pantothenate biosynthesis; (R)-pantothenate from (R)-pantoate and beta-alanine: step 1/1. Catalyzes the condensation of pantoate with beta-alanine in an ATP-dependent reaction via a pantoyl-adenylate intermediate. In Xanthomonas oryzae pv. oryzae (strain MAFF 311018), this protein is Pantothenate synthetase.